We begin with the raw amino-acid sequence, 209 residues long: tRNA(Phe) 7-((3-amino-3-carboxypropyl)-4-demethylwyosine(37)-N(4))-methyltransferase (209 aa).

It belongs to the TYW3 family.

The enzyme catalyses 4-demethyl-7-[(3S)-3-amino-3-carboxypropyl]wyosine(37) in tRNA(Phe) + S-adenosyl-L-methionine = 7-[(3S)-3-amino-3-carboxypropyl]wyosine(37) in tRNA(Phe) + S-adenosyl-L-homocysteine + H(+). S-adenosyl-L-methionine-dependent methyltransferase that acts as a component of the wyosine derivatives biosynthesis pathway. Probably methylates N-4 position of wybutosine-86 to produce wybutosine-72. In Saccharolobus solfataricus (strain ATCC 35092 / DSM 1617 / JCM 11322 / P2) (Sulfolobus solfataricus), this protein is tRNA(Phe) 7-((3-amino-3-carboxypropyl)-4-demethylwyosine(37)-N(4))-methyltransferase.